The primary structure comprises 340 residues: ATPase GET3 (340 aa).

Residue 35-42 (KGGVGKTT) participates in ATP binding. Aspartate 64 is an active-site residue. ATP contacts are provided by glutamate 245 and asparagine 272. Positions 283 and 286 each coordinate Zn(2+).

It belongs to the arsA ATPase family. As to quaternary structure, homodimer.

The protein resides in the cytoplasm. It localises to the endoplasmic reticulum. ATPase required for the post-translational delivery of tail-anchored (TA) proteins to the endoplasmic reticulum. Recognizes and selectively binds the transmembrane domain of TA proteins in the cytosol. This complex then targets to the endoplasmic reticulum by membrane-bound receptors, where the tail-anchored protein is released for insertion. This process is regulated by ATP binding and hydrolysis. ATP binding drives the homodimer towards the closed dimer state, facilitating recognition of newly synthesized TA membrane proteins. ATP hydrolysis is required for insertion. Subsequently, the homodimer reverts towards the open dimer state, lowering its affinity for the membrane-bound receptor, and returning it to the cytosol to initiate a new round of targeting. The protein is ATPase GET3 of Chaetomium globosum (strain ATCC 6205 / CBS 148.51 / DSM 1962 / NBRC 6347 / NRRL 1970) (Soil fungus).